A 280-amino-acid polypeptide reads, in one-letter code: Pantothenate synthetase (280 aa).

Met-30–His-37 is a binding site for ATP. The active-site Proton donor is the His-37. Gln-61 is a binding site for (R)-pantoate. Residue Gln-61 coordinates beta-alanine. Gly-147–Asp-150 is a binding site for ATP. Gln-153 serves as a coordination point for (R)-pantoate. Residues Val-176 and Met-184–Arg-187 contribute to the ATP site.

It belongs to the pantothenate synthetase family. In terms of assembly, homodimer.

The protein resides in the cytoplasm. It catalyses the reaction (R)-pantoate + beta-alanine + ATP = (R)-pantothenate + AMP + diphosphate + H(+). It functions in the pathway cofactor biosynthesis; (R)-pantothenate biosynthesis; (R)-pantothenate from (R)-pantoate and beta-alanine: step 1/1. Catalyzes the condensation of pantoate with beta-alanine in an ATP-dependent reaction via a pantoyl-adenylate intermediate. The polypeptide is Pantothenate synthetase (Thermodesulfovibrio yellowstonii (strain ATCC 51303 / DSM 11347 / YP87)).